The following is a 663-amino-acid chain: Polyunsaturated fatty acid lipoxygenase ALOX12 (663 aa).

Positions 2–114 (GRYRVRVVTG…ILSLPEGTAR (113 aa)) constitute a PLAT domain. Residues 115 to 663 (LAGDNALDVF…PSRIENSITI (549 aa)) enclose the Lipoxygenase domain. Position 246 is a phosphoserine (Ser-246). Fe cation-binding residues include His-360, His-365, His-540, Asn-544, and Ile-663.

Belongs to the lipoxygenase family. Fe cation serves as cofactor. As to expression, found primarily in platelets and in microsomal and cytosolic fractions of the epidermis (at protein level).

The protein localises to the cytoplasm. It localises to the cytosol. It is found in the membrane. It carries out the reaction (5Z,8Z,11Z,14Z)-eicosatetraenoate + O2 = (12S)-hydroperoxy-(5Z,8Z,10E,14Z)-eicosatetraenoate. The enzyme catalyses (9Z,12Z)-octadecadienoate + O2 = (13S)-hydroperoxy-(9Z,11E)-octadecadienoate. It catalyses the reaction 2 leukotriene A4 + O2 + 2 H2O = 2 lipoxin A4. The catalysed reaction is 2 leukotriene A4 + O2 + 2 H2O = 2 lipoxin B4. It carries out the reaction (5Z,8Z,11Z)-eicosatrienoate + O2 = (12S)-hydroperoxy-(5Z,8Z,10E)-eicosatrienoate. The enzyme catalyses (8Z,11Z,14Z)-eicosatrienoate + O2 = (12S)-hydroperoxy-(8Z,10E,14Z)-eicosatrienoate. It catalyses the reaction (4Z,7Z,10Z,13Z,16Z,19Z)-docosahexaenoate + O2 = (14S)-hydroperoxy-(4Z,7Z,10Z,12E,16Z,19Z)-docosahexaenoate. The catalysed reaction is (7S)-hydroperoxy-(4Z,8E,10Z,13Z,16Z,19Z)-docosahexaenoate + O2 = (7S,14S)-dihydroperoxy-(4Z,8E,10Z,12E,16Z,19Z)-docosahexaenoate. It carries out the reaction (7S)-hydroperoxy-(4Z,8E,10Z,13Z,16Z,19Z)-docosahexaenoate + O2 = (7S,17S)-dihydroperoxy-(4Z,8E,10Z,13Z,15E,19Z)-docosahexaenoate. The enzyme catalyses (14R,15S)-epoxy-(5Z,8Z,11Z)-eicosatrienoate + O2 = (12S)-hydroperoxy-(14R,15S)-epoxy-(5Z,8Z,10E)-eicosatrienoate. It catalyses the reaction (14S,15R)-epoxy-(5Z,8Z,11Z)-eicosatrienoate + O2 = (12S)-hydroperoxy-(14S,15R)-epoxy-(5Z,8Z,10E)-eicosatrienoate. The catalysed reaction is (5Z,8Z,11Z,14Z)-eicosatetraenoate + O2 = (15S)-hydroperoxy-(5Z,8Z,11Z,13E)-eicosatetraenoate. It carries out the reaction (14S)-hydroperoxy-(4Z,7Z,10Z,12E,16Z,19Z)-docosahexaenoate = (13S,14S)-epoxy-(4Z,7Z,9E,11E,16Z,19Z)-docosahexaenoate + H2O. The enzyme catalyses N-(5Z,8Z,11Z,14Z)-eicosatetraenoyl-L-alanine + O2 = N-(15S)-hydroperoxy-(5Z,8Z,11Z,13E)-eicosatetraenoyl-alanine. It catalyses the reaction N-(5Z,8Z,11Z,14Z)-eicosatetraenoyl-L-alanine + O2 = N-(12S)-hydroperoxy-(5Z,8Z,10E,14Z)-eicosatetraenoyl-alanine. The catalysed reaction is N-(5Z,8Z,11Z,14Z)-eicosatetraenoyl-gamma-aminobutanoate + O2 = N-(15S)-hydroperoxy-(5Z,8Z,11Z,13E)-eicosatetraenoyl-gamma-aminobutanoate. It carries out the reaction N-(5Z,8Z,11Z,14Z)-eicosatetraenoyl-gamma-aminobutanoate + O2 = N-(12S)-hydroperoxy-(5Z,8Z,10E,14Z)-eicosatetraenoyl-gamma-aminobutanoate. The enzyme catalyses N-(5Z,8Z,11Z,14Z)-eicosatetraenoyl-glycine + O2 = N-(15S)-hydroperoxy-(5Z,8Z,11Z,13E)-eicosatetraenoyl-glycine. It catalyses the reaction N-(5Z,8Z,11Z,14Z)-eicosatetraenoyl-glycine + O2 = N-(12S)-hydroperoxy-(5Z,8Z,10E,14Z)-eicosatetraenoyl-glycine. The catalysed reaction is N-(5Z,8Z,11Z,14Z)-eicosatetraenoyl-taurine + O2 = N-(12S)-hydroperoxy-(5Z,8Z,10E,14Z)-eicosatetraenoyl-taurine. It carries out the reaction N-(5Z,8Z,11Z,14Z)-eicosatetraenoyl-taurine + O2 = N-(15S)-hydroperoxy-(5Z,8Z,11Z,13E)-eicosatetraenoyl-taurine. The enzyme catalyses (5Z,8Z,11Z,14Z,17Z)-eicosapentaenoate + O2 = (12S)-hydroperoxy-(5Z,8Z,10E,14Z,17Z)-eicosapentaenoate. It functions in the pathway lipid metabolism; hydroperoxy eicosatetraenoic acid biosynthesis. Activated by EGF. Arachidonic acid conversion is inhibited by (13S,14S)-epoxy-(4Z,7Z,9E,11E,16Z,19Z)-docosahexaenoate (13S,14S-epoxy-DHA). Arachidonate 12-lipoxygenase activity is decreased when PH decreases from 7.4 to 6. In terms of biological role, catalyzes the regio and stereo-specific incorporation of molecular oxygen into free and esterified polyunsaturated fatty acids generating lipid hydroperoxides that can be further reduced to the corresponding hydroxy species. Mainly converts arachidonate ((5Z,8Z,11Z,14Z)-eicosatetraenoate) to the specific bioactive lipid (12S)-hydroperoxyeicosatetraenoate/(12S)-HPETE. Through the production of bioactive lipids like (12S)-HPETE it regulates different biological processes including platelet activation. It can also catalyze the epoxidation of double bonds of polyunsaturated fatty acids such as (14S)-hydroperoxy-docosahexaenoate/(14S)-HPDHA resulting in the formation of (13S,14S)-epoxy-DHA. Furthermore, it may participate in the sequential oxidations of DHA ((4Z,7Z,10Z,13Z,16Z,19Z)-docosahexaenoate) to generate specialized pro-resolving mediators (SPMs) like resolvin D5 ((7S,17S)-diHPDHA) and (7S,14S)-diHPDHA, that actively down-regulate the immune response and have anti-aggregation properties with platelets. An additional function involves a multistep process by which it transforms leukotriene A4/LTA4 into the bioactive lipids lipoxin A4/LXA4 and lipoxin B4/LXB4, both are vasoactive and LXA4 may regulate neutrophil function via occupancy of specific recognition sites. Can also peroxidize linoleate ((9Z,12Z)-octadecadienoate) to (13S)-hydroperoxyoctadecadienoate/ (13S-HPODE). Due to its role in regulating both the expression of the vascular endothelial growth factor (VEGF, an angiogenic factor involved in the survival and metastasis of solid tumors) and the expression of integrin beta-1 (known to affect tumor cell migration and proliferation), it can be regarded as protumorigenic. Important for cell survival, as it may play a role not only in proliferation but also in the prevention of apoptosis in vascular smooth muscle cells. The chain is Polyunsaturated fatty acid lipoxygenase ALOX12 (Alox12) from Mus musculus (Mouse).